We begin with the raw amino-acid sequence, 127 residues long: UPF0325 protein VC_2264 (127 aa).

It belongs to the UPF0325 family.

This chain is UPF0325 protein VC_2264, found in Vibrio cholerae serotype O1 (strain ATCC 39315 / El Tor Inaba N16961).